We begin with the raw amino-acid sequence, 84 residues long: Cytochrome b559 subunit alpha (84 aa).

A helical membrane pass occupies residues 22–36 (IIHIPAITILFASGF). Histidine 24 is a binding site for heme.

This sequence belongs to the PsbE/PsbF family. As to quaternary structure, heterodimer of an alpha subunit and a beta subunit. PSII is composed of 1 copy each of membrane proteins PsbA, PsbB, PsbC, PsbD, PsbE, PsbF, PsbH, PsbI, PsbJ, PsbK, PsbL, PsbM, PsbT, PsbX, Psb30/Ycf12, peripheral proteins PsbO, CyanoQ (PsbQ), PsbU, PsbV and a large number of cofactors. It forms dimeric complexes. Heme b serves as cofactor.

It is found in the cell inner membrane. In terms of biological role, this b-type cytochrome is tightly associated with the reaction center of photosystem II (PSII). PSII is a light-driven water:plastoquinone oxidoreductase that uses light energy to abstract electrons from H(2)O, generating O(2) and a proton gradient subsequently used for ATP formation. It consists of a core antenna complex that captures photons, and an electron transfer chain that converts photonic excitation into a charge separation. The sequence is that of Cytochrome b559 subunit alpha from Gloeobacter violaceus (strain ATCC 29082 / PCC 7421).